The chain runs to 244 residues: 2,5-diamino-6-ribosylamino-4(3H)-pyrimidinone 5'-phosphate reductase (244 aa).

Residues threonine 74, aspartate 78, isoleucine 160, and 183-187 contribute to the NADP(+) site; that span reads GSHVI.

It belongs to the HTP reductase family. In terms of assembly, homodimer.

It catalyses the reaction 2,5-diamino-6-(1-D-ribitylamino)pyrimidin-4(3H)-one 5'-phosphate + NADP(+) = 2,5-diamino-6-(1-D-ribosylamino)pyrimidin-4(3H)-one 5'-phosphate + NADPH + H(+). The catalysed reaction is 2,5-diamino-6-(1-D-ribitylamino)pyrimidin-4(3H)-one 5'-phosphate + NAD(+) = 2,5-diamino-6-(1-D-ribosylamino)pyrimidin-4(3H)-one 5'-phosphate + NADH + H(+). Its pathway is cofactor biosynthesis; riboflavin biosynthesis. Functionally, catalyzes an early step in riboflavin biosynthesis, the NADPH-dependent reduction of the ribose side chain of 2,5-diamino-6-ribosylamino-4(3H)-pyrimidinone 5'-phosphate, yielding 2,5-diamino-6-ribitylamino-4(3H)-pyrimidinone 5'-phosphate. The polypeptide is 2,5-diamino-6-ribosylamino-4(3H)-pyrimidinone 5'-phosphate reductase (RIB7) (Candida glabrata (strain ATCC 2001 / BCRC 20586 / JCM 3761 / NBRC 0622 / NRRL Y-65 / CBS 138) (Yeast)).